The chain runs to 302 residues: Pyridoxal kinase (302 aa).

Substrate is bound by residues serine 10, threonine 45, and tyrosine 122. ATP-binding positions include 181–182 (TS) and 215–227 (VGPK…TGTG). A substrate-binding site is contributed by aspartate 228.

The protein belongs to the pyridoxine kinase family. In terms of assembly, homodimer. Requires a divalent metal cation as cofactor.

It localises to the cytoplasm. It carries out the reaction pyridoxal + ATP = pyridoxal 5'-phosphate + ADP + H(+). It participates in cofactor metabolism; pyridoxal 5'-phosphate salvage; pyridoxal 5'-phosphate from pyridoxal: step 1/1. Functionally, required for synthesis of pyridoxal-5-phosphate from vitamin B6. This chain is Pyridoxal kinase (pykA), found in Dictyostelium discoideum (Social amoeba).